Reading from the N-terminus, the 249-residue chain is 5'-nucleotidase SurE (249 aa).

Asp-8, Asp-9, Ser-39, and Asn-91 together coordinate a divalent metal cation.

It belongs to the SurE nucleotidase family. Requires a divalent metal cation as cofactor.

Its subcellular location is the cytoplasm. The catalysed reaction is a ribonucleoside 5'-phosphate + H2O = a ribonucleoside + phosphate. Functionally, nucleotidase that shows phosphatase activity on nucleoside 5'-monophosphates. The polypeptide is 5'-nucleotidase SurE (Pseudomonas fluorescens (strain SBW25)).